We begin with the raw amino-acid sequence, 350 residues long: Heat-inducible transcription repressor HrcA (350 aa).

The protein belongs to the HrcA family.

Functionally, negative regulator of class I heat shock genes (grpE-dnaK-dnaJ and groELS operons). Prevents heat-shock induction of these operons. This chain is Heat-inducible transcription repressor HrcA, found in Methylococcus capsulatus (strain ATCC 33009 / NCIMB 11132 / Bath).